Consider the following 345-residue polypeptide: Dihydroorotase (345 aa).

2 residues coordinate Zn(2+): H13 and H15. Substrate-binding positions include 15–17 and N41; that span reads HLR. Residues K100, H137, and H175 each contribute to the Zn(2+) site. The residue at position 100 (K100) is an N6-carboxylysine. H137 lines the substrate pocket. L220 contacts substrate. Residue D248 coordinates Zn(2+). D248 is a catalytic residue. Positions 252 and 264 each coordinate substrate.

The protein belongs to the metallo-dependent hydrolases superfamily. DHOase family. Class II DHOase subfamily. In terms of assembly, homodimer. Zn(2+) serves as cofactor.

It catalyses the reaction (S)-dihydroorotate + H2O = N-carbamoyl-L-aspartate + H(+). Its pathway is pyrimidine metabolism; UMP biosynthesis via de novo pathway; (S)-dihydroorotate from bicarbonate: step 3/3. Catalyzes the reversible cyclization of carbamoyl aspartate to dihydroorotate. The sequence is that of Dihydroorotase from Laribacter hongkongensis (strain HLHK9).